The sequence spans 312 residues: Coiled-coil domain-containing protein 160 homolog (312 aa).

Residues 126–281 (SEGAKFKNQL…EERKREKTHS (156 aa)) are a coiled coil.

It belongs to the CCDC160 family.

This Xenopus tropicalis (Western clawed frog) protein is Coiled-coil domain-containing protein 160 homolog.